A 257-amino-acid polypeptide reads, in one-letter code: Ribonuclease HII (257 aa).

In terms of domain architecture, RNase H type-2 spans 71 to 257; sequence SLIAGIDEVG…TSFEPIKSML (187 aa). 3 residues coordinate a divalent metal cation: Asp-77, Glu-78, and Asp-172.

The protein belongs to the RNase HII family. Mn(2+) serves as cofactor. The cofactor is Mg(2+).

The protein resides in the cytoplasm. The catalysed reaction is Endonucleolytic cleavage to 5'-phosphomonoester.. Its function is as follows. Endonuclease that specifically degrades the RNA of RNA-DNA hybrids. In Streptococcus uberis (strain ATCC BAA-854 / 0140J), this protein is Ribonuclease HII.